A 555-amino-acid polypeptide reads, in one-letter code: DNA-directed primase/polymerase protein (555 aa).

Positions 1 to 22 form a coiled coil; it reads MKRKWEATLKQIEERASHYERK. Residues Arg-76, 114-116, and 165-169 contribute to the substrate site; these read DLE and KFSRH. Mn(2+)-binding residues include Asp-114 and Glu-116. Residues 210 to 230 are disordered; sequence ETTGHEFTHFSETPSEQGTCF. Positions 219–230 are enriched in polar residues; the sequence is FSETPSEQGTCF. Ser-255 is subject to Phosphoserine. Substrate contacts are provided by residues 288-291 and Lys-297; that span reads RNFR. The Zn(2+) site is built by Cys-418, His-425, Cys-445, and Cys-450. The Zinc knuckle motif motif lies at 418 to 451; that stretch reads CENIGRAHRSNNIMILVDLKNEVWYQKCHDPVCK. The tract at residues 480–503 is disordered; that stretch reads TDTTADTETKSPHGPSSSVLSKGA. The interaction with RPA1 stretch occupies residues 480-555; sequence TDTTADTETK…DELLIEVLQE (76 aa). Short sequence motifs (RPA1-binding motif) lie at residues 509–523 and 543–551; these read WDNG…EATE and EIPDELLIE.

The protein belongs to the eukaryotic-type primase small subunit family. In terms of assembly, interacts with RPA1; leading to recruitment to chromatin and stimulate DNA primase activity. Interacts with SSBP1. Interacts with POLDIP2; leading to enhance DNA polymerase activity. Mn(2+) is required as a cofactor.

Its subcellular location is the nucleus. It is found in the mitochondrion matrix. It localises to the chromosome. It carries out the reaction ssDNA + n NTP = ssDNA/pppN(pN)n-1 hybrid + (n-1) diphosphate.. The catalysed reaction is DNA(n) + a 2'-deoxyribonucleoside 5'-triphosphate = DNA(n+1) + diphosphate. In terms of biological role, DNA primase and DNA polymerase required to tolerate replication-stalling lesions by bypassing them. Required to facilitate mitochondrial and nuclear replication fork progression by initiating de novo DNA synthesis using dNTPs and acting as an error-prone DNA polymerase able to bypass certain DNA lesions. Shows a high capacity to tolerate DNA damage lesions such as 8oxoG and abasic sites in DNA. Provides different translesion synthesis alternatives when DNA replication is stalled: able to synthesize DNA primers downstream of lesions, such as ultraviolet (UV) lesions, R-loops and G-quadruplexes, to allow DNA replication to continue. Can also realign primers ahead of 'unreadable lesions' such as abasic sites and 6-4 photoproduct (6-4 pyrimidine-pyrimidinone), thereby skipping the lesion. Repriming avoids fork degradation while leading to accumulation of internal ssDNA gaps behind the forks. Also able to incorporate nucleotides opposite DNA lesions such as 8oxoG, like a regular translesion synthesis DNA polymerase. Also required for reinitiating stalled forks after UV damage during nuclear DNA replication. Required for mitochondrial DNA (mtDNA) synthesis and replication, by reinitiating synthesis after UV damage or in the presence of chain-terminating nucleotides. Prevents APOBEC family-mediated DNA mutagenesis by repriming downstream of abasic site to prohibit error-prone translesion synthesis. Has non-overlapping function with POLH. In addition to its role in DNA damage response, also required to maintain efficient nuclear and mitochondrial DNA replication in unperturbed cells. This Bos taurus (Bovine) protein is DNA-directed primase/polymerase protein.